A 135-amino-acid polypeptide reads, in one-letter code: CDGSH iron-sulfur domain-containing protein 2A (135 aa).

The Lumenal portion of the chain corresponds to 1 to 37 (MVLETISRIIKIQLPAYLKKLPLPETIGGFARLTVSE). Residues 38–60 (WLRLLPLLGILALLGYLTIRPFL) traverse the membrane as a helical segment. The Cytoplasmic segment spans residues 61–135 (PKKKKQKDSL…GPLILKKKIL (75 aa)). [2Fe-2S] cluster-binding residues include Cys-99, Cys-101, Cys-110, and His-114.

The protein belongs to the CISD protein family. CISD2 subfamily. In terms of assembly, homodimer. [2Fe-2S] cluster serves as cofactor.

The protein localises to the endoplasmic reticulum membrane. It localises to the mitochondrion outer membrane. Its function is as follows. Regulator of autophagy that contributes to antagonize becn1-mediated cellular autophagy at the endoplasmic reticulum. Participates in the interaction of bcl2 with becn1 and is required for bcl2-mediated depression of endoplasmic reticulum Ca(2+) stores during autophagy. This Salmo salar (Atlantic salmon) protein is CDGSH iron-sulfur domain-containing protein 2A (cisd2a).